The sequence spans 118 residues: Superoxide-generating NADPH oxidase light chain subunit (118 aa).

4 helical membrane-spanning segments follow: residues 9–29, 36–56, 62–82, and 83–103; these read WAAM…IMGI, IAIY…PLSF, AIFH…VLCY, and FLVP…VFLI.

Belongs to the p22phox family. As to quaternary structure, composed of a heavy chain and a light chain.

Its subcellular location is the cell membrane. Functionally, critical component of the membrane-bound oxidase of phagocytes that generates superoxide. In Dictyostelium discoideum (Social amoeba), this protein is Superoxide-generating NADPH oxidase light chain subunit (cybA).